The sequence spans 175 residues: Protein LHCP TRANSLOCATION DEFECT (175 aa).

Residues 1-68 (MASSSISFSC…WFKFGKNGVD (68 aa)) constitute a chloroplast transit peptide. The stretch at 117–149 (PVDILLMLAATEGDRPKIEELLKAGADYSVKDA) is one ANK repeat.

Interacts with CAO/cpSRP43, but is not a component of the transit complex. Interacts with LHCP (via T14 domain), TIC40 and TIC110. Highly expressed in leaves and seedlings. Detected in roots, but not in germinating seeds.

The protein resides in the plastid. Its subcellular location is the chloroplast thylakoid membrane. The protein localises to the chloroplast envelope. It is found in the chloroplast stroma. Functionally, involved in the import of light-harvesting complex proteins (LHCP) and subsequent routing of these proteins to the chloroplast signal recognition particle (SRP) pathway. The polypeptide is Protein LHCP TRANSLOCATION DEFECT (LTD) (Arabidopsis thaliana (Mouse-ear cress)).